Consider the following 246-residue polypeptide: UPF0736 protein GWCH70_0753 (246 aa).

The protein belongs to the UPF0736 family.

The polypeptide is UPF0736 protein GWCH70_0753 (Geobacillus sp. (strain WCH70)).